Consider the following 261-residue polypeptide: Imidazole glycerol phosphate synthase subunit HisF (261 aa).

Active-site residues include aspartate 12 and aspartate 131.

The protein belongs to the HisA/HisF family. Heterodimer of HisH and HisF.

The protein resides in the cytoplasm. It catalyses the reaction 5-[(5-phospho-1-deoxy-D-ribulos-1-ylimino)methylamino]-1-(5-phospho-beta-D-ribosyl)imidazole-4-carboxamide + L-glutamine = D-erythro-1-(imidazol-4-yl)glycerol 3-phosphate + 5-amino-1-(5-phospho-beta-D-ribosyl)imidazole-4-carboxamide + L-glutamate + H(+). It participates in amino-acid biosynthesis; L-histidine biosynthesis; L-histidine from 5-phospho-alpha-D-ribose 1-diphosphate: step 5/9. In terms of biological role, IGPS catalyzes the conversion of PRFAR and glutamine to IGP, AICAR and glutamate. The HisF subunit catalyzes the cyclization activity that produces IGP and AICAR from PRFAR using the ammonia provided by the HisH subunit. The polypeptide is Imidazole glycerol phosphate synthase subunit HisF (Brucella anthropi (strain ATCC 49188 / DSM 6882 / CCUG 24695 / JCM 21032 / LMG 3331 / NBRC 15819 / NCTC 12168 / Alc 37) (Ochrobactrum anthropi)).